A 797-amino-acid chain; its full sequence is G-type lectin S-receptor-like serine/threonine-protein kinase SD2-2 (797 aa).

A signal peptide spans 1–23 (MPCTTYLPLLLLLFLLPPPSVQS). In terms of domain architecture, Bulb-type lectin spans 24–139 (KVIIKGNQTI…DGSPVWQSFD (116 aa)). Residues 24-401 (KVIIKGNQTI…KNSKGNISKS (378 aa)) are Extracellular-facing. N-linked (GlcNAc...) asparagine glycosylation is found at Asn-30, Asn-49, Asn-150, and Asn-197. The EGF-like; atypical domain maps to 274 to 310 (PEDPCRVYNLCGQLGFCSSELLKPCACIRGFRPRNDA). 4 disulfides stabilise this stretch: Cys-278–Cys-290, Cys-284–Cys-298, Cys-359–Cys-381, and Cys-363–Cys-369. In terms of domain architecture, PAN spans 321-407 (CRRENGDSGE…ISKSIIILCS (87 aa)). Asn-366 and Asn-397 each carry an N-linked (GlcNAc...) asparagine glycan. Residues 402–422 (IIILCSVVGSISVLGFTLLVP) form a helical membrane-spanning segment. Residues 423–797 (LILLKRSRKR…SRSSFGRPSP (375 aa)) are Cytoplasmic-facing. A Protein kinase domain is found at 461–742 (NGFSDKVGHG…TVVKMLEGVV (282 aa)). Residues 467-475 (VGHGGFGAV) and Lys-490 each bind ATP. Residues 550-566 (SPKLLSWETRFRIALGT) form a caM-binding region. Asp-585 functions as the Proton acceptor in the catalytic mechanism. The disordered stretch occupies residues 767 to 797 (GTSCSEGHGCSDLNTGLSSPGSRSSFGRPSP). The span at 784-797 (SSPGSRSSFGRPSP) shows a compositional bias: low complexity.

Belongs to the protein kinase superfamily. Ser/Thr protein kinase family. Post-translationally, autophosphorylated. Expressed in the shoot apex and roots, specifically in lateral roots and at the root-hypocotyl transition zone.

It is found in the cell membrane. It carries out the reaction L-seryl-[protein] + ATP = O-phospho-L-seryl-[protein] + ADP + H(+). The enzyme catalyses L-threonyl-[protein] + ATP = O-phospho-L-threonyl-[protein] + ADP + H(+). In terms of biological role, serine/threonine-protein kinase. This chain is G-type lectin S-receptor-like serine/threonine-protein kinase SD2-2 (SD22), found in Arabidopsis thaliana (Mouse-ear cress).